Here is a 155-residue protein sequence, read N- to C-terminus: Nuclear cap-binding protein subunit 2 (155 aa).

Residues Tyr19, Tyr42, 111–115 (RTDWD), 122–126 (RQYGR), and 132–133 (QV) each bind mRNA. Residues 39–117 (NTLYVGNLSF…RIIRTDWDAG (79 aa)) enclose the RRM domain. A disordered region spans residues 122–155 (RQYGRGKSGGQVRDEYRQDYDPARGGYGKVVSRP). Residues 133–143 (VRDEYRQDYDP) are compositionally biased toward basic and acidic residues.

The protein belongs to the RRM NCBP2 family. Component of the nuclear cap-binding complex (CBC), a heterodimer composed of ncbp1/cbp80 and ncbp2/cbp20 that interacts with m7GpppG-capped RNA.

The protein resides in the nucleus. It localises to the cytoplasm. Component of the cap-binding complex (CBC), which binds co-transcriptionally to the 5' cap of pre-mRNAs and is involved in various processes such as pre-mRNA splicing, translation regulation, nonsense-mediated mRNA decay, RNA-mediated gene silencing (RNAi) by microRNAs (miRNAs) and mRNA export. The CBC complex is involved in mRNA export from the nucleus, leading to the recruitment of the mRNA export machinery to the 5' end of mRNA and to mRNA export in a 5' to 3' direction through the nuclear pore. The CBC complex is also involved in mediating U snRNA and intronless mRNAs export from the nucleus. The CBC complex is essential for a pioneer round of mRNA translation, before steady state translation when the CBC complex is replaced by cytoplasmic cap-binding protein eIF4E. The pioneer round of mRNA translation mediated by the CBC complex plays a central role in nonsense-mediated mRNA decay (NMD), NMD only taking place in mRNAs bound to the CBC complex, but not on eIF4E-bound mRNAs. The CBC complex enhances NMD in mRNAs containing at least one exon-junction complex (EJC), promoting the interaction between upf1 and upf2. The CBC complex is also involved in 'failsafe' NMD, which is independent of the EJC complex, while it does not participate in Staufen-mediated mRNA decay (SMD). During cell proliferation, the CBC complex is also involved in microRNAs (miRNAs) biogenesis via its interaction with srrt/ars2, thereby being required for miRNA-mediated RNA interference. The CBC complex also acts as a negative regulator of parn, thereby acting as an inhibitor of mRNA deadenylation. In the CBC complex, ncbp2/cbp20 recognizes and binds capped RNAs (m7GpppG-capped RNA) but requires ncbp1/cbp80 to stabilize the movement of its N-terminal loop and lock the CBC into a high affinity cap-binding state with the cap structure. The conventional cap-binding complex with NCBP2 binds both small nuclear RNA (snRNA) and messenger (mRNA) and is involved in their export from the nucleus. The sequence is that of Nuclear cap-binding protein subunit 2 (ncbp2) from Salmo salar (Atlantic salmon).